A 241-amino-acid chain; its full sequence is MKSLIFVLLLGAVFAEEDKIVGGYECTKHSQAHQVSLNSGYHFCGGSLVSKDWVVSAAHCYKSVLRVRLGEHHIRVNEGTEQYISSSSVIRHPNYSSYNINNDIMLIKLTKPATLNQYVHAVALPTECAADATMCTVSGWGNTMSSVADGDKLQCLSLPILSHADCANSYPGMITQSMFCAGYLEGGKDSCQGDSGGPVVCNGVLQGVVSWGYGCAERDHPGVYAKVCVLSGWVRDTMANY.

Positions 1–13 are cleaved as a signal peptide; it reads MKSLIFVLLLGAV. A propeptide spans 14-19 (activation peptide); the sequence is FAEEDK. The Peptidase S1 domain occupies 20–239; that stretch reads IVGGYECTKH…LSGWVRDTMA (220 aa). 6 cysteine pairs are disulfide-bonded: C26–C155, C44–C60, C128–C228, C135–C201, C166–C180, and C191–C215. Catalysis depends on charge relay system residues H59 and D103. The active-site Charge relay system is the S195.

This sequence belongs to the peptidase S1 family.

Its subcellular location is the secreted. It is found in the extracellular space. The enzyme catalyses Preferential cleavage: Arg-|-Xaa, Lys-|-Xaa.. This chain is Trypsin-1, found in Gadus morhua (Atlantic cod).